A 164-amino-acid polypeptide reads, in one-letter code: UPF0561 protein C2orf68 homolog (164 aa).

Basic and acidic residues-rich tracts occupy residues 1–13 (MEVIRDGEGESVK) and 35–49 (IARDDYDREVKQAKE). The segment at 1 to 98 (MEVIRDGEGE…WNESSSGTEM (98 aa)) is disordered. The segment covering 50 to 64 (KQRRRHTNTPRRPRR) has biased composition (basic residues).

The protein belongs to the UPF0561 family.

The polypeptide is UPF0561 protein C2orf68 homolog (Danio rerio (Zebrafish)).